We begin with the raw amino-acid sequence, 968 residues long: Chaperone protein ClpB3, chloroplastic (968 aa).

A chloroplast-targeting transit peptide spans 1–67 (MATATTTATA…RLDHRPFVVR (67 aa)). The 145-residue stretch at 78–222 (TQQEFTEMAW…KSAIESIRGK (145 aa)) folds into the Clp R domain. Repeat stretches follow at residues 82 to 147 (FTEM…IQRQ) and 159 to 222 (LGRD…IRGK). Residues 237–485 (LEKYGKDLTA…KLKMEITSKP (249 aa)) are i. 282–289 (GEPGVGKT) contacts ATP. A coiled-coil region spans residues 488–606 (LDELDRSVIK…NEYLSSGKSM (119 aa)). The segment at 611–802 (VLGSDIAEIV…VIIMTSNVGS (192 aa)) is II. 685–692 (GPTGVGKT) serves as a coordination point for ATP.

The protein belongs to the ClpA/ClpB family.

The protein resides in the plastid. The protein localises to the chloroplast. Its function is as follows. Molecular chaperone essential for chloroplast development and seedling viability. Mediates internal thylakoid membrane formation and confers thermotolerance to chloroplasts during heat stress. The polypeptide is Chaperone protein ClpB3, chloroplastic (CLPB3) (Arabidopsis thaliana (Mouse-ear cress)).